The following is a 303-amino-acid chain: Recombination-associated protein RdgC (303 aa).

Belongs to the RdgC family.

The protein resides in the cytoplasm. Its subcellular location is the nucleoid. Functionally, may be involved in recombination. The polypeptide is Recombination-associated protein RdgC (Shewanella frigidimarina (strain NCIMB 400)).